Consider the following 266-residue polypeptide: Protein crossbronx-like (266 aa).

A UBC core domain is found at 15–178 (KQGYHILAEY…VQEQAIASRN (164 aa)).

It belongs to the ubiquitin-conjugating enzyme family. FTS subfamily.

The polypeptide is Protein crossbronx-like (Drosophila erecta (Fruit fly)).